The chain runs to 274 residues: Large ribosomal subunit protein uL2 (274 aa).

Residues 223 to 274 are disordered; it reads VAMNPVDHPHGGGEGRTSGGRHPVTPWGVPTKGYKTRSNKRTDKYIVRRRTK.

The protein belongs to the universal ribosomal protein uL2 family. In terms of assembly, part of the 50S ribosomal subunit. Forms a bridge to the 30S subunit in the 70S ribosome.

Its function is as follows. One of the primary rRNA binding proteins. Required for association of the 30S and 50S subunits to form the 70S ribosome, for tRNA binding and peptide bond formation. It has been suggested to have peptidyltransferase activity; this is somewhat controversial. Makes several contacts with the 16S rRNA in the 70S ribosome. This chain is Large ribosomal subunit protein uL2, found in Shewanella amazonensis (strain ATCC BAA-1098 / SB2B).